Here is a 129-residue protein sequence, read N- to C-terminus: Protein yippee-like (129 aa).

The Yippee domain occupies 12–109 (KIYSCKHCGT…LERFKITGPD (98 aa)). Zn(2+) is bound by residues cysteine 16, cysteine 19, cysteine 72, and cysteine 75.

This sequence belongs to the yippee family.

The protein is Protein yippee-like of Solanum tuberosum (Potato).